Reading from the N-terminus, the 268-residue chain is Ribosomal RNA small subunit methyltransferase A (268 aa).

Asparagine 23, isoleucine 25, glycine 50, glutamate 72, aspartate 97, and asparagine 116 together coordinate S-adenosyl-L-methionine.

It belongs to the class I-like SAM-binding methyltransferase superfamily. rRNA adenine N(6)-methyltransferase family. RsmA subfamily.

The protein resides in the cytoplasm. It carries out the reaction adenosine(1518)/adenosine(1519) in 16S rRNA + 4 S-adenosyl-L-methionine = N(6)-dimethyladenosine(1518)/N(6)-dimethyladenosine(1519) in 16S rRNA + 4 S-adenosyl-L-homocysteine + 4 H(+). Its function is as follows. Specifically dimethylates two adjacent adenosines (A1518 and A1519) in the loop of a conserved hairpin near the 3'-end of 16S rRNA in the 30S particle. May play a critical role in biogenesis of 30S subunits. The protein is Ribosomal RNA small subunit methyltransferase A of Rickettsia bellii (strain OSU 85-389).